Consider the following 412-residue polypeptide: CCA-adding enzyme (412 aa).

ATP is bound by residues Ser-41 and Lys-44. The CTP site is built by Ser-41 and Lys-44. Residues Asp-53, Asp-55, and Asp-106 each contribute to the Mg(2+) site. His-129, Lys-149, and Tyr-158 together coordinate ATP. The CTP site is built by His-129, Lys-149, and Tyr-158.

It belongs to the tRNA nucleotidyltransferase/poly(A) polymerase family. Archaeal CCA-adding enzyme subfamily. Homodimer. Forms a tetramer upon binding two tRNAs. However, tRNA-induced tetramer formation is not required for CCA addition. The cofactor is Mg(2+).

The catalysed reaction is a tRNA precursor + 2 CTP + ATP = a tRNA with a 3' CCA end + 3 diphosphate. It catalyses the reaction a tRNA with a 3' CCA end + 2 CTP + ATP = a tRNA with a 3' CCACCA end + 3 diphosphate. Its function is as follows. Catalyzes the addition and repair of the essential 3'-terminal CCA sequence in tRNAs without using a nucleic acid template. Adds these three nucleotides in the order of C, C, and A to the tRNA nucleotide-73, using CTP and ATP as substrates and producing inorganic pyrophosphate. tRNA 3'-terminal CCA addition is required both for tRNA processing and repair. Also involved in tRNA surveillance by mediating tandem CCA addition to generate a CCACCA at the 3' terminus of unstable tRNAs. While stable tRNAs receive only 3'-terminal CCA, unstable tRNAs are marked with CCACCA and rapidly degraded. The structural flexibility of RNA controls the choice between CCA versus CCACCA addition: following the first CCA addition cycle, nucleotide-binding to the active site triggers a clockwise screw motion, producing torque on the RNA. This ejects stable RNAs, whereas unstable RNAs are refolded while bound to the enzyme and subjected to a second CCA catalytic cycle. The sequence is that of CCA-adding enzyme from Saccharolobus shibatae (strain ATCC 51178 / DSM 5389 / JCM 8931 / NBRC 15437 / B12) (Sulfolobus shibatae).